The sequence spans 199 residues: Ribonuclease HII (199 aa).

The 190-residue stretch at 9-198 (QFVAGVDEVG…VRAAIEQMNL (190 aa)) folds into the RNase H type-2 domain. A divalent metal cation is bound by residues Asp-15, Glu-16, and Asp-107.

The protein belongs to the RNase HII family. Mn(2+) serves as cofactor. It depends on Mg(2+) as a cofactor.

It is found in the cytoplasm. It carries out the reaction Endonucleolytic cleavage to 5'-phosphomonoester.. Its function is as follows. Endonuclease that specifically degrades the RNA of RNA-DNA hybrids. This Saccharophagus degradans (strain 2-40 / ATCC 43961 / DSM 17024) protein is Ribonuclease HII.